The sequence spans 720 residues: ATP-dependent RNA helicase glh-3 (720 aa).

Residues 1-11 (MDKSPTKTSIR) are compositionally biased toward polar residues. 2 disordered regions span residues 1 to 34 (MDKS…SCIK) and 125 to 180 (LNSR…SYGN). 2 stretches are compositionally biased toward basic and acidic residues: residues 141 to 154 (NVKE…RSDD) and 162 to 172 (SAKDEERDRDS). 2 CCHC-type zinc fingers span residues 202–219 (NTCF…ECSA) and 222–239 (RECA…ECAS). A Q motif motif is present at residues 298–326 (KSFSDSDIPQSMRRNVERAGYTRTTPIQQ). In terms of domain architecture, Helicase ATP-binding spans 329–513 (LPLVADGKDI…RKLLREDYTM (185 aa)). 342–349 (AQTGSGKT) is an ATP binding site. Residues 456–459 (DEAD) carry the DEAD box motif. The Helicase C-terminal domain occupies 549–698 (DIDTYTTEKN…VVPSWMKEAA (150 aa)). Residues 696 to 720 (EAAGGTSNPNKFEKSIDTEEPEEAW) form a disordered region.

The protein belongs to the DEAD box helicase family. DDX4/VASA subfamily. As to quaternary structure, interacts with csn-5. Interacts (via C-terminus) with kgb-1. Interacts with zyx-1.

The protein resides in the cytoplasm. It carries out the reaction ATP + H2O = ADP + phosphate + H(+). In terms of biological role, probable ATP-binding RNA helicase. The sequence is that of ATP-dependent RNA helicase glh-3 from Caenorhabditis elegans.